The primary structure comprises 2812 residues: Polyunsaturated fatty acid synthase subunit A (2812 aa).

Positions 12–472 (DTRIAVIGMS…GANYHAVLEE (461 aa)) constitute a Ketosynthase family 3 (KS3) domain. Catalysis depends on for beta-ketoacyl synthase activity residues Cys213, His348, and His390. The region spanning 602–913 (LFSGQGAQYT…TVSVNPASGK (312 aa)) is the Malonyl-CoA:ACP transacylase (MAT) domain. Positions 1000–1048 (DEEAKREAARLQKQLEDAQRQLDEAKRAADEANQKLAAAKEEAKSAAAS) form a coiled coil. 3 Carrier domains span residues 1114–1193 (ALLA…KAEI), 1232–1308 (ERAE…KAEI), and 1342–1418 (AKAE…KAEI). An O-(pantetheine 4'-phosphoryl)serine mark is found at Ser1152, Ser1267, and Ser1377. The segment at 1422–1442 (SAPAPAAAAPAPAAPAPAAAA) is disordered. Residues 1423-1442 (APAPAAAAPAPAAPAPAAAA) show a composition bias toward low complexity. The Carrier 4 domain occupies 1455 to 1531 (AKAETVVMEV…EVVDAMKAEI (77 aa)). Ser1490 is subject to O-(pantetheine 4'-phosphoryl)serine. Residues 1535–1555 (SAPAPAAAAPAPAAPAPAAAA) are disordered. Positions 1536–1555 (APAPAAAAPAPAAPAPAAAA) are enriched in low complexity. 4 Carrier domains span residues 1568–1644 (AKAE…KAEI), 1681–1757 (AKAE…KAEI), 1792–1868 (AKAE…KAEI), and 1903–1979 (AKAE…KAEI). 4 positions are modified to O-(pantetheine 4'-phosphoryl)serine: Ser1603, Ser1716, Ser1827, and Ser1938. One can recognise a Ketoreductase (KR) domain in the interval 2257–2484 (VVSGGARGIT…VKSICFGPWD (228 aa)). Residues 2524–2651 (EILVGNWRTP…RAVVVLSSQG (128 aa)) form an N-terminal hotdog fold region. The region spanning 2524-2812 (EILVGNWRTP…SVIATDSLAF (289 aa)) is the PKS/mFAS DH domain. The dehydratase (DH) domain stretch occupies residues 2540-2800 (ETITLHRKIS…NEQGDLFIDV (261 aa)). The active-site Proton acceptor; for dehydratase activity is the His2559. The tract at residues 2666–2812 (ADPAAQSAVY…SVIATDSLAF (147 aa)) is C-terminal hotdog fold. The active-site Proton donor; for dehydratase activity is Asp2730.

As to quaternary structure, component of the polyunsaturated fatty acid synthase complex composed of at least ORF-A, ORF-B and ORF-C. Requires pantetheine 4'-phosphate as cofactor.

It participates in lipid metabolism; fatty acid biosynthesis. In terms of biological role, poliketide synthase-like protein; part of the polyunsaturated fatty acid synthase composed of the 3 PKS-like subunits A, B and C. While the saturated fatty acids (SFAs) in Thraustochytrium are produced by the conventional fatty acid synthase (FAS) pathway, polyunsaturated fatty acids (PUFAs) including docosahexeanoic acid (DHA) and docosapentaenoic acid (DPA) are synthesized via an anaerobical PKS pathway. PUFA synthase assimilates fatty acyl-CoA, the product of FAS, as the starter unit to synthesize DPA, and this starter unit may be butyryl-CoA, hexanoyl-CoA, or octanoyl-CoA. DPA and DHA biosynthesis seem to differ by the reduction at the N-3 position by PUFA synthase, not the extension of carbon chain. In DHA biosynthesis, PUFA synthase extends the fatty acyl chain from the methyl toward the carboxyl end, and the double bond is formed when the carbon chain is growing, instead of afterward. Therefore, PUFA synthase is unable to transform DPA to DHA, suggesting that DPA is not the precursor of DHA. Moreover, DPA molecule is partly extended by FAS KS domain, so DPA biosynthesis is less dependent on PUFA synthase KS domain than DHA. The chain is Polyunsaturated fatty acid synthase subunit A from Thraustochytrium sp. (strain ATCC 26185 / S-3).